Reading from the N-terminus, the 61-residue chain is Beta-insect depressant toxin BotIT5 (61 aa).

The LCN-type CS-alpha/beta domain maps to 1 to 61 (DGYIRKRDGC…TWKSETNTCG (61 aa)). Disulfide bonds link cysteine 10/cysteine 60, cysteine 14/cysteine 35, cysteine 21/cysteine 42, and cysteine 25/cysteine 44. The residue at position 61 (glycine 61) is a Glycine amide.

This sequence belongs to the long (4 C-C) scorpion toxin superfamily. Sodium channel inhibitor family. Beta subfamily. As to expression, expressed by the venom gland.

It is found in the secreted. Depressant insect beta-toxins cause a transient contraction paralysis followed by a slow flaccid paralysis. They bind voltage-independently at site-4 of sodium channels (Nav) and shift the voltage of activation toward more negative potentials thereby affecting sodium channel activation and promoting spontaneous and repetitive firing. This toxin is active only on insects. The chain is Beta-insect depressant toxin BotIT5 from Buthus occitanus tunetanus (Common European scorpion).